A 242-amino-acid polypeptide reads, in one-letter code: MVSGRFYLSCLLLGSLGSMCILFTIYWMQYWRGGFAWNGSIYMFNWHPVLMVAGMVVFYGGASLVYRLPQSWVGPKLPWKLLHAALHLMAFVLTVVGLVAVFTFHNHGRTANLYSLHSWLGITTVFLFACQWFLGFAVFLLPWASMWLRSLLKPIHVFFGAAILSLSIASVISGINEKLFFSLKNTTRPYHSLPSEAVFANSTGMLVVAFGLLVLYILLASSWKRPEPGILTDRQPLLHDGE.

The Cytoplasmic portion of the chain corresponds to 1 to 7; sequence MVSGRFY. The helical transmembrane segment at 8–28 threads the bilayer; it reads LSCLLLGSLGSMCILFTIYWM. The Cytochrome b561 domain occupies 12–219; the sequence is LLGSLGSMCI…FGLLVLYILL (208 aa). Residues 29–45 are Lumenal-facing; it reads QYWRGGFAWNGSIYMFN. N-linked (GlcNAc...) asparagine glycosylation is present at N38. The chain crosses the membrane as a helical span at residues 46 to 66; that stretch reads WHPVLMVAGMVVFYGGASLVY. H47 and R67 together coordinate heme b. At 67 to 83 the chain is on the cytoplasmic side; that stretch reads RLPQSWVGPKLPWKLLH. L-ascorbate-binding residues include K76 and K80. H83 provides a ligand contact to heme b. Residues 84–104 traverse the membrane as a helical segment; it reads AALHLMAFVLTVVGLVAVFTF. The Lumenal segment spans residues 105–119; the sequence is HNHGRTANLYSLHSW. Heme b is bound by residues 112 to 115 and H117; that span reads NLYS. Residues 120 to 140 form a helical membrane-spanning segment; that stretch reads LGITTVFLFACQWFLGFAVFL. Residues 141 to 154 are Cytoplasmic-facing; that stretch reads LPWASMWLRSLLKP. R149 contributes to the L-ascorbate binding site. A helical transmembrane segment spans residues 155–175; the sequence is IHVFFGAAILSLSIASVISGI. Positions 156 and 177 each coordinate heme b. Residues 176 to 202 are Lumenal-facing; it reads NEKLFFSLKNTTRPYHSLPSEAVFANS. A helical transmembrane segment spans residues 203-223; the sequence is TGMLVVAFGLLVLYILLASSW. K224 contributes to the heme b binding site. Residues 224–242 lie on the Cytoplasmic side of the membrane; the sequence is KRPEPGILTDRQPLLHDGE.

In terms of assembly, homodimer. Heme b is required as a cofactor. In terms of processing, N-glycosylated.

Its subcellular location is the late endosome membrane. It localises to the lysosome membrane. It catalyses the reaction Fe(3+)(out) + L-ascorbate(in) = monodehydro-L-ascorbate radical(in) + Fe(2+)(out) + H(+). Its function is as follows. Transmembrane reductase that uses ascorbate as an electron donor in the cytoplasm and transfers electrons across membranes to reduce iron cations Fe(3+) into Fe(2+) in the lumen of the late endosome and lysosome. Reduced iron can then be extruded from the late endosome and lysosome to the cytoplasm by divalent metal-specific transporters. It is therefore most probably involved in endosomal and lysosomal cellular iron homeostasis. The chain is Lysosomal membrane ascorbate-dependent ferrireductase CYB561A3 from Homo sapiens (Human).